The sequence spans 208 residues: Tektin bundle-interacting protein 1 (208 aa).

In terms of assembly, microtubule inner protein component of sperm flagellar doublet microtubules. Expressed in trachea multiciliated cells.

Its subcellular location is the cytoplasm. It localises to the cytoskeleton. The protein resides in the cilium axoneme. It is found in the flagellum axoneme. Its function is as follows. Microtubule inner protein (MIP) part of the dynein-decorated doublet microtubules (DMTs) in cilia axoneme, which is required for motile cilia beating. Located at the center of the tektin bundle where may function to recruit tektins or stabilize the bundle. The protein is Tektin bundle-interacting protein 1 (TEKTIP1) of Bos taurus (Bovine).